The following is a 348-amino-acid chain: MKAQYFFWILFLIGFYWMIYLYQDFLMDALIAGLLCVGFFQVKVFLDKRFFNVVSSFLCVLILASVLIVPLYFIVYKSSNIIFEINFEKFSALIKWLKGIITENLSHFPTIHDGASKFLENFSAASITGYLLKISSYVGRYSLKLITDALFILGLLFFFFYYGERFYRYFLGVLPLGMNQSKKIFEEVAGILRIVLLTSLITVILEGVAFGVMIVWFGHDGWSLGILYGLASLVPAVGGALIWIPIAIYELYHGNVNEAIFIALYSILLISVLIDSVIKPILIVFIKKRIFKTTLKINEMLIFFSMIAGISQFGFWGIIVGPTITAFFIALLRLYENYFIQNEQKACE.

8 helical membrane passes run 6–26 (FFWILFLIGFYWMIYLYQDFL), 27–47 (MDALIAGLLCVGFFQVKVFLD), 56–76 (SFLCVLILASVLIVPLYFIVY), 143–163 (LKLITDALFILGLLFFFFYYG), 194–214 (IVLLTSLITVILEGVAFGVMI), 224–244 (LGILYGLASLVPAVGGALIWI), 266–286 (SILLISVLIDSVIKPILIVFI), and 300–320 (MLIFFSMIAGISQFGFWGIIV).

Belongs to the autoinducer-2 exporter (AI-2E) (TC 2.A.86) family.

Its subcellular location is the cell membrane. This is Putative transport protein HP_0567 from Helicobacter pylori (strain ATCC 700392 / 26695) (Campylobacter pylori).